The chain runs to 61 residues: MAKDFVTGKHTRFGNTRSHALNHSRRSWKPNLQKVRILVDGKPKRVWVSARALKSGKVTRV.

Residues Met1 to Arg26 form a disordered region.

It belongs to the bacterial ribosomal protein bL28 family.

This Pediococcus pentosaceus (strain ATCC 25745 / CCUG 21536 / LMG 10740 / 183-1w) protein is Large ribosomal subunit protein bL28.